The chain runs to 187 residues: Large ribosomal subunit protein uL5 (187 aa).

This sequence belongs to the universal ribosomal protein uL5 family. In terms of assembly, part of the 50S ribosomal subunit; part of the 5S rRNA/L5/L18/L25 subcomplex. Contacts the 5S rRNA and the P site tRNA. Forms a bridge to the 30S subunit in the 70S ribosome.

This is one of the proteins that bind and probably mediate the attachment of the 5S RNA into the large ribosomal subunit, where it forms part of the central protuberance. In the 70S ribosome it contacts protein S13 of the 30S subunit (bridge B1b), connecting the 2 subunits; this bridge is implicated in subunit movement. Contacts the P site tRNA; the 5S rRNA and some of its associated proteins might help stabilize positioning of ribosome-bound tRNAs. The polypeptide is Large ribosomal subunit protein uL5 (Mycobacteroides abscessus (strain ATCC 19977 / DSM 44196 / CCUG 20993 / CIP 104536 / JCM 13569 / NCTC 13031 / TMC 1543 / L948) (Mycobacterium abscessus)).